The following is a 335-amino-acid chain: Tetraacyldisaccharide 4'-kinase (335 aa).

59 to 66 is an ATP binding site; the sequence is TAGGNGKT.

It belongs to the LpxK family.

It carries out the reaction a lipid A disaccharide + ATP = a lipid IVA + ADP + H(+). It functions in the pathway glycolipid biosynthesis; lipid IV(A) biosynthesis; lipid IV(A) from (3R)-3-hydroxytetradecanoyl-[acyl-carrier-protein] and UDP-N-acetyl-alpha-D-glucosamine: step 6/6. Functionally, transfers the gamma-phosphate of ATP to the 4'-position of a tetraacyldisaccharide 1-phosphate intermediate (termed DS-1-P) to form tetraacyldisaccharide 1,4'-bis-phosphate (lipid IVA). This chain is Tetraacyldisaccharide 4'-kinase, found in Vibrio vulnificus (strain YJ016).